The following is a 406-amino-acid chain: Acetylornithine/succinyldiaminopimelate aminotransferase (406 aa).

Residues 108-109 (GT) and Phe141 each bind pyridoxal 5'-phosphate. Arg144 lines the N(2)-acetyl-L-ornithine pocket. 226–229 (DEVQ) is a binding site for pyridoxal 5'-phosphate. Residue Lys255 is modified to N6-(pyridoxal phosphate)lysine. Residue Ser283 participates in N(2)-acetyl-L-ornithine binding. A pyridoxal 5'-phosphate-binding site is contributed by Thr284.

It belongs to the class-III pyridoxal-phosphate-dependent aminotransferase family. ArgD subfamily. Homodimer. Requires pyridoxal 5'-phosphate as cofactor.

The protein resides in the cytoplasm. It catalyses the reaction N(2)-acetyl-L-ornithine + 2-oxoglutarate = N-acetyl-L-glutamate 5-semialdehyde + L-glutamate. The catalysed reaction is N-succinyl-(2S,6S)-2,6-diaminopimelate + 2-oxoglutarate = (S)-2-succinylamino-6-oxoheptanedioate + L-glutamate. The protein operates within amino-acid biosynthesis; L-arginine biosynthesis; N(2)-acetyl-L-ornithine from L-glutamate: step 4/4. It participates in amino-acid biosynthesis; L-lysine biosynthesis via DAP pathway; LL-2,6-diaminopimelate from (S)-tetrahydrodipicolinate (succinylase route): step 2/3. In terms of biological role, involved in both the arginine and lysine biosynthetic pathways. This chain is Acetylornithine/succinyldiaminopimelate aminotransferase, found in Escherichia coli (strain K12).